Consider the following 729-residue polypeptide: Fatty acid oxidation complex subunit alpha (729 aa).

The tract at residues Met1–Lys189 is enoyl-CoA hydratase/isomerase. Asp296 contacts substrate. The interval Glu311–Ala729 is 3-hydroxyacyl-CoA dehydrogenase. NAD(+) is bound by residues Met324, Asp343, Val400–Glu402, Lys407, and Ser429. His450 functions as the For 3-hydroxyacyl-CoA dehydrogenase activity in the catalytic mechanism. NAD(+) is bound at residue Asn453. The substrate site is built by Asn500 and Tyr660. Positions Thr707–Ala729 are disordered.

This sequence in the N-terminal section; belongs to the enoyl-CoA hydratase/isomerase family. It in the C-terminal section; belongs to the 3-hydroxyacyl-CoA dehydrogenase family. As to quaternary structure, heterotetramer of two alpha chains (FadB) and two beta chains (FadA).

The enzyme catalyses a (3S)-3-hydroxyacyl-CoA + NAD(+) = a 3-oxoacyl-CoA + NADH + H(+). The catalysed reaction is a (3S)-3-hydroxyacyl-CoA = a (2E)-enoyl-CoA + H2O. It catalyses the reaction a 4-saturated-(3S)-3-hydroxyacyl-CoA = a (3E)-enoyl-CoA + H2O. It carries out the reaction (3S)-3-hydroxybutanoyl-CoA = (3R)-3-hydroxybutanoyl-CoA. The enzyme catalyses a (3Z)-enoyl-CoA = a 4-saturated (2E)-enoyl-CoA. The catalysed reaction is a (3E)-enoyl-CoA = a 4-saturated (2E)-enoyl-CoA. The protein operates within lipid metabolism; fatty acid beta-oxidation. In terms of biological role, involved in the aerobic and anaerobic degradation of long-chain fatty acids via beta-oxidation cycle. Catalyzes the formation of 3-oxoacyl-CoA from enoyl-CoA via L-3-hydroxyacyl-CoA. It can also use D-3-hydroxyacyl-CoA and cis-3-enoyl-CoA as substrate. The protein is Fatty acid oxidation complex subunit alpha of Salmonella typhi.